A 114-amino-acid chain; its full sequence is uncharacterized protein (114 aa).

Residues 90–114 form a disordered region; it reads VESSQKRKPEESTIGMDAPKKMKRG.

This is an uncharacterized protein from Caenorhabditis elegans.